The chain runs to 484 residues: Probable cytochrome P450 508A1 (484 aa).

The helical transmembrane segment at 1-21 (MALFEIIISLFVVYIIHNAIS) threads the bilayer. Cysteine 428 is a binding site for heme.

Belongs to the cytochrome P450 family. Heme serves as cofactor.

It is found in the membrane. This Dictyostelium discoideum (Social amoeba) protein is Probable cytochrome P450 508A1 (cyp508A1-1).